Reading from the N-terminus, the 72-residue chain is NAD(P)H-quinone oxidoreductase subunit O (72 aa).

Belongs to the complex I NdhO subunit family. In terms of assembly, NDH-1 can be composed of about 15 different subunits; different subcomplexes with different compositions have been identified which probably have different functions.

The protein localises to the cellular thylakoid membrane. It carries out the reaction a plastoquinone + NADH + (n+1) H(+)(in) = a plastoquinol + NAD(+) + n H(+)(out). The catalysed reaction is a plastoquinone + NADPH + (n+1) H(+)(in) = a plastoquinol + NADP(+) + n H(+)(out). In terms of biological role, NDH-1 shuttles electrons from an unknown electron donor, via FMN and iron-sulfur (Fe-S) centers, to quinones in the respiratory and/or the photosynthetic chain. The immediate electron acceptor for the enzyme in this species is believed to be plastoquinone. Couples the redox reaction to proton translocation, and thus conserves the redox energy in a proton gradient. Cyanobacterial NDH-1 also plays a role in inorganic carbon-concentration. The sequence is that of NAD(P)H-quinone oxidoreductase subunit O from Crocosphaera subtropica (strain ATCC 51142 / BH68) (Cyanothece sp. (strain ATCC 51142)).